Consider the following 783-residue polypeptide: BMP/retinoic acid-inducible neural-specific protein 2 (783 aa).

An N-terminal signal peptide occupies residues 1–33 (MRWQCGTRFRGLRPVVAPWTALLALGLPGWVLA). Residues 85–281 (RYRIYREFAR…FVAAALSYIT (197 aa)) enclose the MACPF domain. 6 N-linked (GlcNAc...) asparagine glycosylation sites follow: Asn-185, Asn-354, Asn-473, Asn-579, Asn-626, and Asn-658.

The protein belongs to the BRINP family.

The protein localises to the secreted. In terms of biological role, inhibits neuronal cell proliferation by negative regulation of the cell cycle transition. The sequence is that of BMP/retinoic acid-inducible neural-specific protein 2 (BRINP2) from Pongo abelii (Sumatran orangutan).